A 336-amino-acid polypeptide reads, in one-letter code: uncharacterized protein (336 aa).

A disordered region spans residues 196-222 (YKEGDDSNWDDFGSESEDDSKEAHSEE). Residues 201–215 (DSNWDDFGSESEDDS) are compositionally biased toward acidic residues. Ser211 bears the Phosphoserine mark.

This is an uncharacterized protein from Schizosaccharomyces pombe (strain 972 / ATCC 24843) (Fission yeast).